Consider the following 156-residue polypeptide: ATP synthase subunit b (156 aa).

A helical transmembrane segment spans residues 11–31 (AIAFFIFVVFCMKYVWPPLMA).

Belongs to the ATPase B chain family. As to quaternary structure, F-type ATPases have 2 components, F(1) - the catalytic core - and F(0) - the membrane proton channel. F(1) has five subunits: alpha(3), beta(3), gamma(1), delta(1), epsilon(1). F(0) has three main subunits: a(1), b(2) and c(10-14). The alpha and beta chains form an alternating ring which encloses part of the gamma chain. F(1) is attached to F(0) by a central stalk formed by the gamma and epsilon chains, while a peripheral stalk is formed by the delta and b chains.

The protein localises to the cell inner membrane. F(1)F(0) ATP synthase produces ATP from ADP in the presence of a proton or sodium gradient. F-type ATPases consist of two structural domains, F(1) containing the extramembraneous catalytic core and F(0) containing the membrane proton channel, linked together by a central stalk and a peripheral stalk. During catalysis, ATP synthesis in the catalytic domain of F(1) is coupled via a rotary mechanism of the central stalk subunits to proton translocation. Its function is as follows. Component of the F(0) channel, it forms part of the peripheral stalk, linking F(1) to F(0). The chain is ATP synthase subunit b from Aeromonas hydrophila subsp. hydrophila (strain ATCC 7966 / DSM 30187 / BCRC 13018 / CCUG 14551 / JCM 1027 / KCTC 2358 / NCIMB 9240 / NCTC 8049).